Consider the following 424-residue polypeptide: Arginine ADP-riboxanase OspC4 (424 aa).

NAD(+) is bound by residues His-85, Gln-86, Ser-87, Leu-91, Ile-104, Asn-114, Phe-130, His-148, Phe-153, Asp-173, and Glu-268. Glu-268 is a catalytic residue. ANK repeat units lie at residues 311–340 (MAHQALAYSLGNKKADIALYLLSKFNFTKQ), 355–386 (NLYDVEYLLSKDGANYKVLEYFINNGLVDVNK), and 393–422 (SGDTMLDNAMKSKDSKMIDFFIKKWSGIRQ).

This sequence belongs to the OspC family.

Its subcellular location is the secreted. The protein resides in the host cytoplasm. The catalysed reaction is L-arginyl-[protein] + NAD(+) = ADP-riboxanated L-argininyl-[protein] + nicotinamide + NH4(+) + H(+). Functionally, ADP-riboxanase effector that mediates arginine ADP-riboxanation of host caspase CASP4/CASP11, thereby inhibiting pyroptosis. This is Arginine ADP-riboxanase OspC4 from Shigella flexneri.